Reading from the N-terminus, the 250-residue chain is NADH-quinone oxidoreductase subunit B 2 (250 aa).

Residues cysteine 41, cysteine 42, cysteine 107, and cysteine 137 each contribute to the [4Fe-4S] cluster site.

The protein belongs to the complex I 20 kDa subunit family. NDH-1 is composed of 14 different subunits. Subunits NuoB, C, D, E, F, and G constitute the peripheral sector of the complex. [4Fe-4S] cluster is required as a cofactor.

It localises to the cell membrane. It catalyses the reaction a quinone + NADH + 5 H(+)(in) = a quinol + NAD(+) + 4 H(+)(out). NDH-1 shuttles electrons from NADH, via FMN and iron-sulfur (Fe-S) centers, to quinones in the respiratory chain. The immediate electron acceptor for the enzyme in this species is believed to be ubiquinone. Couples the redox reaction to proton translocation (for every two electrons transferred, four hydrogen ions are translocated across the cytoplasmic membrane), and thus conserves the redox energy in a proton gradient. This is NADH-quinone oxidoreductase subunit B 2 from Herpetosiphon aurantiacus (strain ATCC 23779 / DSM 785 / 114-95).